Here is a 201-residue protein sequence, read N- to C-terminus: dITP/XTP pyrophosphatase (201 aa).

9-14 is a substrate binding site; the sequence is SNNAGK. The Mg(2+) site is built by Glu-41 and Asp-70. Asp-70 functions as the Proton acceptor in the catalytic mechanism. Residues Ser-71, 155–158, Lys-178, and 183–184 contribute to the substrate site; these read FGYD and HR.

Belongs to the HAM1 NTPase family. As to quaternary structure, homodimer. Mg(2+) is required as a cofactor.

It catalyses the reaction XTP + H2O = XMP + diphosphate + H(+). It carries out the reaction dITP + H2O = dIMP + diphosphate + H(+). The enzyme catalyses ITP + H2O = IMP + diphosphate + H(+). Functionally, pyrophosphatase that catalyzes the hydrolysis of nucleoside triphosphates to their monophosphate derivatives, with a high preference for the non-canonical purine nucleotides XTP (xanthosine triphosphate), dITP (deoxyinosine triphosphate) and ITP. Seems to function as a house-cleaning enzyme that removes non-canonical purine nucleotides from the nucleotide pool, thus preventing their incorporation into DNA/RNA and avoiding chromosomal lesions. This chain is dITP/XTP pyrophosphatase, found in Methylococcus capsulatus (strain ATCC 33009 / NCIMB 11132 / Bath).